A 146-amino-acid polypeptide reads, in one-letter code: Ninjurin-1 (146 aa).

Residues 1–33 (MASEAMELNGGVNRRDDPGARPQQGRMSRNTPL) form a disordered region. At 1–75 (MASEAMELNG…ELGPSFSFYI (75 aa)) the chain is on the extracellular side. Residues 37 to 66 (HYANKKSAAESMLDIALLMANASQLKTVLE) form a required to induce plasma membrane rupture region. The helix alpha1 stretch occupies residues 41 to 52 (KKSAAESMLDIA). The helix alpha2 stretch occupies residues 55-71 (MANASQLKTVLELGPSF). Residue Asn-57 is glycosylated (N-linked (GlcNAc...) asparagine). The chain crosses the membrane as a helical span at residues 76-100 (PLITLISISLTLQIIVGILLIFIVK). At 101–110 (WNLNDSSKHY) the chain is on the cytoplasmic side. A helical membrane pass occupies residues 111–135 (ILNLLENIVTALVFIVVVVNVFITA). Over 136–146 (FGVQRPDDKTS) the chain is Extracellular.

It belongs to the ninjurin family. As to quaternary structure, homooligomer; in response to death stimuli, homooligomerizes into long, highly branched filaments and large, ring-shaped structures in the membrane. Homodimer; in absence of death stimuli, forms an inactive homodimer. Homooligomer; in response to death stimuli, homooligomerizes into long, highly branched filaments and large, ring-shaped structures in the membrane.

The protein resides in the cell membrane. It is found in the synaptic cell membrane. With respect to regulation, in normal conditions, NINJ1 is inactivated. In response to death stimuli, homooligomerizes and disrupts membrane integrity by introducing the hydrophilic faces of alpha1 and alpha2 helices into the hydrophobic membrane. Homooligomerization and ability to mediate plasma membrane rupture is inhibited by glycine; it is unclear whether glycine directly or indirectly inhibits homooligomerization. In response to death stimuli, homooligomerizes and disrupts membrane integrity by introducing the hydrophilic faces of alpha1 and alpha2 helices into the hydrophobic membrane. Homooligomerization and ability to mediate plasma membrane rupture is inhibited by glycine; it is unclear whether glycine directly or indirectly inhibits homooligomerization. In normal conditions, NINJ1 is autoinhibited via formation of a homodimer: in the inactive homodimer, the alpha1 and alpha2 helices (residues 41-71) form a single transmembrane region without a kink, in which hydrophilic faces of alpha1 and alpha2 helices are sequestered. Effector of various programmed cell death, such as pyroptosis and necroptosis, which mediates plasma membrane rupture (cytolysis). Oligomerizes in response to death stimuli and forms ring-like structures on the plasma membrane: acts by cutting and shedding membrane disks, like a cookie cutter, leading to membrane damage and loss that cannot be repaired by the cell. Plasma membrane rupture leads to release intracellular molecules named damage-associated molecular patterns (DAMPs) that propagate the inflammatory response. Mechanistically, mediates plasma membrane rupture by introducing hydrophilic faces of 2 alpha helices into the hydrophobic membrane. Induces plasma membrane rupture downstream of Gasdermin (GSDMA, GSDMB, GSDMC, GSDMD, or GSDME) or MLKL during pyroptosis or necroptosis, respectively. Also acts as an effector of PANoptosis and ferroptosis. Induces plasma membrane rupture in response to cell swelling caused by osmotic stress. Acts as a regulator of Toll-like receptor 4 (TLR4) signaling triggered by lipopolysaccharide (LPS) during systemic inflammation; directly binds LPS. Involved in leukocyte migration during inflammation by promoting transendothelial migration of macrophages via homotypic binding. Promotes the migration of monocytes across the brain endothelium to central nervous system inflammatory lesions. Also acts as a homophilic transmembrane adhesion molecule involved in various processes such as axonal growth, cell chemotaxis and angiogenesis. Promotes cell adhesion by mediating homophilic interactions via its extracellular N-terminal adhesion motif (N-NAM). Also involved in striated muscle growth and differentiation. This is Ninjurin-1 from Danio rerio (Zebrafish).